The primary structure comprises 198 residues: Peptidyl-tRNA hydrolase (198 aa).

Y15 contributes to the tRNA binding site. H20 acts as the Proton acceptor in catalysis. The tRNA site is built by F66, N68, and N114.

The protein belongs to the PTH family. As to quaternary structure, monomer.

The protein resides in the cytoplasm. It catalyses the reaction an N-acyl-L-alpha-aminoacyl-tRNA + H2O = an N-acyl-L-amino acid + a tRNA + H(+). In terms of biological role, hydrolyzes ribosome-free peptidyl-tRNAs (with 1 or more amino acids incorporated), which drop off the ribosome during protein synthesis, or as a result of ribosome stalling. Functionally, catalyzes the release of premature peptidyl moieties from peptidyl-tRNA molecules trapped in stalled 50S ribosomal subunits, and thus maintains levels of free tRNAs and 50S ribosomes. This chain is Peptidyl-tRNA hydrolase, found in Cupriavidus necator (strain ATCC 17699 / DSM 428 / KCTC 22496 / NCIMB 10442 / H16 / Stanier 337) (Ralstonia eutropha).